The sequence spans 339 residues: tRNA N6-adenosine threonylcarbamoyltransferase (339 aa).

Fe cation contacts are provided by His114 and His118. Substrate contacts are provided by residues 137–141 (VVSGG), Asp170, Gly183, Asp187, and Asn277. Residue Asp305 participates in Fe cation binding.

This sequence belongs to the KAE1 / TsaD family. Fe(2+) is required as a cofactor.

The protein resides in the cytoplasm. It catalyses the reaction L-threonylcarbamoyladenylate + adenosine(37) in tRNA = N(6)-L-threonylcarbamoyladenosine(37) in tRNA + AMP + H(+). Its function is as follows. Required for the formation of a threonylcarbamoyl group on adenosine at position 37 (t(6)A37) in tRNAs that read codons beginning with adenine. Is involved in the transfer of the threonylcarbamoyl moiety of threonylcarbamoyl-AMP (TC-AMP) to the N6 group of A37, together with TsaE and TsaB. TsaD likely plays a direct catalytic role in this reaction. This chain is tRNA N6-adenosine threonylcarbamoyltransferase, found in Clostridium perfringens (strain SM101 / Type A).